The chain runs to 217 residues: Cytidylate kinase (217 aa).

11-19 (GPAGAGKST) is a binding site for ATP.

This sequence belongs to the cytidylate kinase family. Type 1 subfamily.

The protein resides in the cytoplasm. It carries out the reaction CMP + ATP = CDP + ADP. It catalyses the reaction dCMP + ATP = dCDP + ADP. The polypeptide is Cytidylate kinase (Clostridium perfringens (strain ATCC 13124 / DSM 756 / JCM 1290 / NCIMB 6125 / NCTC 8237 / Type A)).